The chain runs to 145 residues: Pleckstrin homology domain-containing protein 1 (145 aa).

Positions 26–127 (NPERSGWLTK…WINSIGRSIV (102 aa)) constitute a PH domain. Residues 29–53 (RSGWLTKQGDYIKTWRRRWFVLKRG) are binds specifically PtdIns3P.

As to quaternary structure, binds PtdIns3P. Ubiquitously expressed.

Its subcellular location is the cytoplasm. Binds specifically to phosphatidylinositol 3-phosphate (PtdIns3P), but not to other phosphoinositides. The sequence is that of Pleckstrin homology domain-containing protein 1 (PH1) from Arabidopsis thaliana (Mouse-ear cress).